Reading from the N-terminus, the 161-residue chain is Phosphopantetheine adenylyltransferase (161 aa).

Ser-9 is a substrate binding site. ATP is bound by residues 9–10 (SF) and His-17. The substrate site is built by Lys-41, Thr-73, and Arg-87. ATP is bound by residues 88–90 (GLR), Glu-98, and 123–129 (YSFISST).

It belongs to the bacterial CoaD family. Homohexamer. Mg(2+) serves as cofactor.

The protein resides in the cytoplasm. The catalysed reaction is (R)-4'-phosphopantetheine + ATP + H(+) = 3'-dephospho-CoA + diphosphate. Its pathway is cofactor biosynthesis; coenzyme A biosynthesis; CoA from (R)-pantothenate: step 4/5. In terms of biological role, reversibly transfers an adenylyl group from ATP to 4'-phosphopantetheine, yielding dephospho-CoA (dPCoA) and pyrophosphate. The chain is Phosphopantetheine adenylyltransferase from Desulforamulus reducens (strain ATCC BAA-1160 / DSM 100696 / MI-1) (Desulfotomaculum reducens).